The following is a 147-amino-acid chain: Large ribosomal subunit protein uL15 (147 aa).

The tract at residues 1 to 45 is disordered; sequence MRLEDLRPTPGAMKKRKRVGRGPGSGHGKTSGRGHKGQKARGSGK. The segment covering 30-44 has biased composition (basic residues); that stretch reads TSGRGHKGQKARGSG.

Belongs to the universal ribosomal protein uL15 family. In terms of assembly, part of the 50S ribosomal subunit.

In terms of biological role, binds to the 23S rRNA. The protein is Large ribosomal subunit protein uL15 of Thermotoga sp. (strain RQ2).